The chain runs to 119 residues: Large ribosomal subunit protein bL19 (119 aa).

The protein belongs to the bacterial ribosomal protein bL19 family.

In terms of biological role, this protein is located at the 30S-50S ribosomal subunit interface and may play a role in the structure and function of the aminoacyl-tRNA binding site. The protein is Large ribosomal subunit protein bL19 of Pseudarthrobacter chlorophenolicus (strain ATCC 700700 / DSM 12829 / CIP 107037 / JCM 12360 / KCTC 9906 / NCIMB 13794 / A6) (Arthrobacter chlorophenolicus).